A 90-amino-acid chain; its full sequence is Arminin 7722 (90 aa).

The signal sequence occupies residues 1–18 (MRSASLILFVAIVALTYA). Residues 19–59 (RSYEDIKEEIRNEVENEILDDLEEENDELDDNAQEVSDPRA) constitute a propeptide that is removed on maturation. The residue at position 87 (T87) is a Threonine amide.

This sequence belongs to the arminin family. As to expression, expressed in entodermal epithelium along the body column.

It is found in the secreted. The protein localises to the target cell membrane. Its function is as follows. Antimicrobial peptide with a broad-spectrum antimicrobial activity. Keeps its antibacterial activity under a wide range of salt concentrations that mimic physiological conditions of human blood, which is surprising, since Hydra is an obligate freshwater animal with nearly no salt tolerance. Does not affect red blood cells. In Hydra vulgaris (Hydra), this protein is Arminin 7722.